A 140-amino-acid chain; its full sequence is Encapsulated ferritin-like protein (140 aa).

Glutamate 31 is a Ca(2+) binding site. Glutamate 32 provides a ligand contact to Fe cation. Glutamate 34 contributes to the Ca(2+) binding site. Residues glutamate 62 and histidine 65 each contribute to the Fe cation site. The tract at residues 100-140 (ADTAGEGSGGDAAKGATAQGDGSLGIGSLKGEAALARPPRL) is disordered. Residues 100–140 (ADTAGEGSGGDAAKGATAQGDGSLGIGSLKGEAALARPPRL) are targeting peptide.

It belongs to the ferritin-like superfamily. EncFtn family. In terms of assembly, monomers form antiparallel dimers which assemble in a decameric ring 7 nm in diameter and 4.5 nm thick with a central channel (construct without targeting peptide). Growth in Fe(2+)-rich medium induces oligomerization, the monomer does not bind metals. The target peptide probably extends away from the ring, to allow binding to the interior of the encapsulin nanocompartment shell. The cofactor is Fe(2+). Ca(2+) serves as cofactor.

The protein resides in the encapsulin nanocompartment. The enzyme catalyses 4 Fe(2+) + O2 + 4 H(+) = 4 Fe(3+) + 2 H2O. With respect to regulation, ferroxidase activity inhibited by Zn(2+). Mutants at Glu-31, Glu-34 and Trp-38 are also inhibited by Zn(2+). Cargo protein of a type 1 encapsulin nanocompartment. A ferritin-like ferroxidase that mineralizes iron inside the encapsulin nanocompartment. Converts Fe(2+) to Fe(3+) that is released to the exterior of the decameric complex for deposition in the encapsulin nanocompartment. In solution the decamer binds 10-15 iron cations; in the encapsulin nanocompartment the decamer can bind up to 48 ions, perhaps via its internal channel and on its exterior. The empty encapsulin nanocompartment sequesters about 2200 Fe ions while the cargo-loaded nanocompartment can maximally sequester about 4150 Fe ions. EncFtn retains ferroxidase activity when encapsulated. Flux in the active site di-iron metal center is thought to be controlled by the 'entry site' of the protein, which both attracts metal and controls the rate of iron oxidation. Encapsulation in the nanocompartment does not alter either function of this protein. The sequence is that of Encapsulated ferritin-like protein from Rhodospirillum rubrum (strain ATCC 11170 / ATH 1.1.1 / DSM 467 / LMG 4362 / NCIMB 8255 / S1).